A 316-amino-acid polypeptide reads, in one-letter code: Acetyl-coenzyme A carboxylase carboxyl transferase subunit alpha (316 aa).

A CoA carboxyltransferase C-terminal domain is found at 36-290 (PLRTQLETLR…GSVISRHLDD (255 aa)).

This sequence belongs to the AccA family. As to quaternary structure, acetyl-CoA carboxylase is a heterohexamer composed of biotin carboxyl carrier protein (AccB), biotin carboxylase (AccC) and two subunits each of ACCase subunit alpha (AccA) and ACCase subunit beta (AccD).

It localises to the cytoplasm. It catalyses the reaction N(6)-carboxybiotinyl-L-lysyl-[protein] + acetyl-CoA = N(6)-biotinyl-L-lysyl-[protein] + malonyl-CoA. Its pathway is lipid metabolism; malonyl-CoA biosynthesis; malonyl-CoA from acetyl-CoA: step 1/1. Component of the acetyl coenzyme A carboxylase (ACC) complex. First, biotin carboxylase catalyzes the carboxylation of biotin on its carrier protein (BCCP) and then the CO(2) group is transferred by the carboxyltransferase to acetyl-CoA to form malonyl-CoA. This is Acetyl-coenzyme A carboxylase carboxyl transferase subunit alpha from Deinococcus radiodurans (strain ATCC 13939 / DSM 20539 / JCM 16871 / CCUG 27074 / LMG 4051 / NBRC 15346 / NCIMB 9279 / VKM B-1422 / R1).